The sequence spans 44 residues: Photosystem I reaction center subunit IX (44 aa).

A helical membrane pass occupies residues Phe9–Ile29.

The protein belongs to the PsaJ family.

Its subcellular location is the cellular thylakoid membrane. May help in the organization of the PsaE and PsaF subunits. The sequence is that of Photosystem I reaction center subunit IX from Prochlorococcus marinus (strain MIT 9301).